Here is a 188-residue protein sequence, read N- to C-terminus: Elongation factor P (188 aa).

Residue K34 is modified to N6-(3,6-diaminohexanoyl)-5-hydroxylysine.

The protein belongs to the elongation factor P family. In terms of processing, is beta-lysylated on the epsilon-amino group of Lys-34 by the combined action of EpmA and EpmB, and then hydroxylated on the C5 position of the same residue by EpmC. Lysylation is critical for the stimulatory effect of EF-P on peptide-bond formation. The lysylation moiety would extend toward the peptidyltransferase center and stabilize the terminal 3-CCA end of the tRNA. The hydroxylation of the C5 position on Lys-34 would allow additional potential stabilizing hydrogen-bond interactions with the P-tRNA.

It is found in the cytoplasm. Its pathway is protein biosynthesis; polypeptide chain elongation. Functionally, involved in peptide bond synthesis. Alleviates ribosome stalling that occurs when 3 or more consecutive Pro residues or the sequence PPG is present in a protein, possibly by augmenting the peptidyl transferase activity of the ribosome. Modification of Lys-34 is required for alleviation. This chain is Elongation factor P, found in Salmonella arizonae (strain ATCC BAA-731 / CDC346-86 / RSK2980).